We begin with the raw amino-acid sequence, 463 residues long: Bifunctional protein HldE (463 aa).

Positions 1–311 (MKKILVVGDL…EEIALILNQT (311 aa)) are ribokinase. 191 to 194 (NRFE) is an ATP binding site. Asp260 is an active-site residue. A cytidylyltransferase region spans residues 334 to 463 (FTNGCFDLLH…IEKIKRTCND (130 aa)).

The protein in the N-terminal section; belongs to the carbohydrate kinase PfkB family. It in the C-terminal section; belongs to the cytidylyltransferase family. In terms of assembly, homodimer.

The catalysed reaction is D-glycero-beta-D-manno-heptose 7-phosphate + ATP = D-glycero-beta-D-manno-heptose 1,7-bisphosphate + ADP + H(+). It catalyses the reaction D-glycero-beta-D-manno-heptose 1-phosphate + ATP + H(+) = ADP-D-glycero-beta-D-manno-heptose + diphosphate. The protein operates within nucleotide-sugar biosynthesis; ADP-L-glycero-beta-D-manno-heptose biosynthesis; ADP-L-glycero-beta-D-manno-heptose from D-glycero-beta-D-manno-heptose 7-phosphate: step 1/4. It functions in the pathway nucleotide-sugar biosynthesis; ADP-L-glycero-beta-D-manno-heptose biosynthesis; ADP-L-glycero-beta-D-manno-heptose from D-glycero-beta-D-manno-heptose 7-phosphate: step 3/4. Catalyzes the phosphorylation of D-glycero-D-manno-heptose 7-phosphate at the C-1 position to selectively form D-glycero-beta-D-manno-heptose-1,7-bisphosphate. Its function is as follows. Catalyzes the ADP transfer from ATP to D-glycero-beta-D-manno-heptose 1-phosphate, yielding ADP-D-glycero-beta-D-manno-heptose. The polypeptide is Bifunctional protein HldE (Helicobacter pylori (strain G27)).